A 391-amino-acid polypeptide reads, in one-letter code: 3-ketoacyl-CoA thiolase (391 aa).

Cys-95 acts as the Acyl-thioester intermediate in catalysis. Residues His-347 and Cys-377 each act as proton acceptor in the active site.

Belongs to the thiolase-like superfamily. Thiolase family. In terms of assembly, heterotetramer of two alpha chains (FadB) and two beta chains (FadA).

Its subcellular location is the cytoplasm. It carries out the reaction an acyl-CoA + acetyl-CoA = a 3-oxoacyl-CoA + CoA. The protein operates within lipid metabolism; fatty acid beta-oxidation. Catalyzes the final step of fatty acid oxidation in which acetyl-CoA is released and the CoA ester of a fatty acid two carbons shorter is formed. This is 3-ketoacyl-CoA thiolase from Marinomonas sp. (strain MWYL1).